The following is a 62-amino-acid chain: Protein DsrB (62 aa).

Belongs to the DsrB family.

This is Protein DsrB from Escherichia fergusonii (strain ATCC 35469 / DSM 13698 / CCUG 18766 / IAM 14443 / JCM 21226 / LMG 7866 / NBRC 102419 / NCTC 12128 / CDC 0568-73).